The sequence spans 514 residues: Peptide chain release factor 3 (514 aa).

Positions Lys-8 to His-268 constitute a tr-type G domain. GTP is bound by residues Ser-17–Thr-24, Asp-85–His-89, and Asn-139–Asp-142.

The protein belongs to the TRAFAC class translation factor GTPase superfamily. Classic translation factor GTPase family. PrfC subfamily.

The protein localises to the cytoplasm. In terms of biological role, increases the formation of ribosomal termination complexes and stimulates activities of RF-1 and RF-2. It binds guanine nucleotides and has strong preference for UGA stop codons. It may interact directly with the ribosome. The stimulation of RF-1 and RF-2 is significantly reduced by GTP and GDP, but not by GMP. This is Peptide chain release factor 3 from Streptococcus gordonii (strain Challis / ATCC 35105 / BCRC 15272 / CH1 / DL1 / V288).